Here is a 167-residue protein sequence, read N- to C-terminus: Phosphopantetheine adenylyltransferase (167 aa).

A substrate-binding site is contributed by T13. Residues 13 to 14 (TF) and H21 contribute to the ATP site. Residues K45, L78, and R92 each contribute to the substrate site. Residues 93–95 (GLR), E103, and 128–134 (TQFISSS) contribute to the ATP site.

The protein belongs to the bacterial CoaD family. Homohexamer. The cofactor is Mg(2+).

Its subcellular location is the cytoplasm. It catalyses the reaction (R)-4'-phosphopantetheine + ATP + H(+) = 3'-dephospho-CoA + diphosphate. The protein operates within cofactor biosynthesis; coenzyme A biosynthesis; CoA from (R)-pantothenate: step 4/5. Functionally, reversibly transfers an adenylyl group from ATP to 4'-phosphopantetheine, yielding dephospho-CoA (dPCoA) and pyrophosphate. The protein is Phosphopantetheine adenylyltransferase of Wolbachia sp. subsp. Brugia malayi (strain TRS).